The following is a 51-amino-acid chain: Ovomucoid (51 aa).

In terms of domain architecture, Kazal-like spans Val-3–Cys-51. 3 disulfides stabilise this stretch: Cys-5/Cys-35, Cys-13/Cys-32, and Cys-21/Cys-51. Asn-42 carries N-linked (GlcNAc...) asparagine glycosylation.

The protein resides in the secreted. The sequence is that of Ovomucoid from Rhynchotus rufescens (Red-winged tinamou).